We begin with the raw amino-acid sequence, 248 residues long: MAGHSQFANIKHRKGAQDAKRAQRFTKLIREIIVSAKQGLPDPEFNSRLRSAIIAAKKENLPKDRIDAAIKSATGNTQSDNYEEVVYEGYGPGNIALMIQTLTNNRNRTAAELRHALSKYNGKLGESGSVSFLFNHVGVIAYKAASIDNFDSLFNIAIELQALDVEETTQDESQEKMYYVTCNVQDFGNVRDQLFNKFSDAEFSRLFWKPSDILKIEDEEIQKKISSLMDLLENNDDVQYIDSNFTFC.

Residues 1 to 21 (MAGHSQFANIKHRKGAQDAKR) form a disordered region.

The protein belongs to the TACO1 family.

The protein resides in the cytoplasm. This Ehrlichia canis (strain Jake) protein is Probable transcriptional regulatory protein Ecaj_0351.